The following is a 165-amino-acid chain: AP-3 complex subunit sigma (165 aa).

The protein belongs to the adaptor complexes small subunit family. Adaptor protein complex 3 (AP-3) is a heterotetramer composed of 2 large adaptins (apl5 and apl6), a medium adaptin (apm3) and a small adaptin (aps3).

It localises to the golgi apparatus. It is found in the cytoplasmic vesicle membrane. Part of the AP-3 complex, an adaptor-related complex which is not clathrin-associated. The complex is associated with the Golgi region as well as more peripheral structures. It facilitates the budding of vesicles from the Golgi membrane and may be directly involved in trafficking to the vacuole. This Schizosaccharomyces pombe (strain 972 / ATCC 24843) (Fission yeast) protein is AP-3 complex subunit sigma (aps3).